The chain runs to 395 residues: tRNA-specific 2-thiouridylase MnmA (395 aa).

Residues 7–14 and Met33 contribute to the ATP site; that span reads GLSGGVDS. Positions 95–97 are interaction with target base in tRNA; the sequence is NPD. Residue Cys100 is the Nucleophile of the active site. Residues Cys100 and Cys200 are joined by a disulfide bond. Gly124 contributes to the ATP binding site. An interaction with tRNA region spans residues 150-152; it reads KDQ. Cys200 serves as the catalytic Cysteine persulfide intermediate. The interaction with tRNA stretch occupies residues 346-347; the sequence is RY.

Belongs to the MnmA/TRMU family.

It is found in the cytoplasm. It carries out the reaction S-sulfanyl-L-cysteinyl-[protein] + uridine(34) in tRNA + AH2 + ATP = 2-thiouridine(34) in tRNA + L-cysteinyl-[protein] + A + AMP + diphosphate + H(+). Catalyzes the 2-thiolation of uridine at the wobble position (U34) of tRNA, leading to the formation of s(2)U34. This is tRNA-specific 2-thiouridylase MnmA from Christiangramia forsetii (strain DSM 17595 / CGMCC 1.15422 / KT0803) (Gramella forsetii).